The chain runs to 346 residues: Ribosomal RNA small subunit methyltransferase H (346 aa).

Residues 47–49 (GGY), Asp65, Phe92, Asp113, and Gln120 contribute to the S-adenosyl-L-methionine site. Over residues 270-279 (RGEAPSRRLP) the composition is skewed to basic and acidic residues. The interval 270 to 346 (RGEAPSRRLP…ALPQRAAKGR (77 aa)) is disordered.

Belongs to the methyltransferase superfamily. RsmH family.

It is found in the cytoplasm. It catalyses the reaction cytidine(1402) in 16S rRNA + S-adenosyl-L-methionine = N(4)-methylcytidine(1402) in 16S rRNA + S-adenosyl-L-homocysteine + H(+). Its function is as follows. Specifically methylates the N4 position of cytidine in position 1402 (C1402) of 16S rRNA. The chain is Ribosomal RNA small subunit methyltransferase H from Methylocella silvestris (strain DSM 15510 / CIP 108128 / LMG 27833 / NCIMB 13906 / BL2).